The sequence spans 452 residues: Eukaryotic translation initiation factor 3 subunit E (452 aa).

The region spanning 257–426 (TDLFFSPAYI…GTVIMNHPPQ (170 aa)) is the PCI domain.

It belongs to the eIF-3 subunit E family. As to quaternary structure, component of the eukaryotic translation initiation factor 3 (eIF-3) complex.

The protein localises to the cytoplasm. Functionally, component of the eukaryotic translation initiation factor 3 (eIF-3) complex, which is involved in protein synthesis of a specialized repertoire of mRNAs and, together with other initiation factors, stimulates binding of mRNA and methionyl-tRNAi to the 40S ribosome. The eIF-3 complex specifically targets and initiates translation of a subset of mRNAs involved in cell proliferation. The protein is Eukaryotic translation initiation factor 3 subunit E (int6) of Aspergillus niger (strain ATCC MYA-4892 / CBS 513.88 / FGSC A1513).